The sequence spans 903 residues: Probable leucine--tRNA ligase, mitochondrial (903 aa).

Position 68 is an N6-acetyllysine (Lys-68). The 'HIGH' region signature appears at 92-102 (YPSGKLHMGHV). Lys-236 is modified (N6-acetyllysine). The 'KMSKS' region motif lies at 639–643 (KMSKS). Position 642 (Lys-642) interacts with ATP. A Phosphoserine modification is found at Ser-711.

This sequence belongs to the class-I aminoacyl-tRNA synthetase family.

The protein localises to the mitochondrion matrix. It carries out the reaction tRNA(Leu) + L-leucine + ATP = L-leucyl-tRNA(Leu) + AMP + diphosphate. The chain is Probable leucine--tRNA ligase, mitochondrial (LARS2) from Pongo abelii (Sumatran orangutan).